The following is a 309-amino-acid chain: Peptide methionine sulfoxide reductase MsrA/MsrB (309 aa).

The peptide methionine sulfoxide reductase A stretch occupies residues 1 to 153; the sequence is MIYLAGGCFW…PNGYCHIDIN (153 aa). Residue Cys8 is part of the active site. The region spanning 170–293 is the MsrB domain; that stretch reads ATEIKEKLSA…NSLSITFIPK (124 aa). Cys282 serves as the catalytic Nucleophile.

The protein in the N-terminal section; belongs to the MsrA Met sulfoxide reductase family. In the C-terminal section; belongs to the MsrB Met sulfoxide reductase family.

It catalyses the reaction L-methionyl-[protein] + [thioredoxin]-disulfide + H2O = L-methionyl-(S)-S-oxide-[protein] + [thioredoxin]-dithiol. It carries out the reaction [thioredoxin]-disulfide + L-methionine + H2O = L-methionine (S)-S-oxide + [thioredoxin]-dithiol. The catalysed reaction is L-methionyl-[protein] + [thioredoxin]-disulfide + H2O = L-methionyl-(R)-S-oxide-[protein] + [thioredoxin]-dithiol. Has an important function as a repair enzyme for proteins that have been inactivated by oxidation. Catalyzes the reversible oxidation-reduction of methionine sulfoxide in proteins to methionine. This is Peptide methionine sulfoxide reductase MsrA/MsrB (msrAB) from Streptococcus pyogenes serotype M18 (strain MGAS8232).